A 447-amino-acid chain; its full sequence is Transcriptional enhancer factor TEF-4 (447 aa).

Disordered stretches follow at residues 1–46 and 183–218; these read MGEP…GVWS and TPFTLSLTPPSTDLPGYEPPQALSPLPPPTPSPPAW. Low complexity predominate over residues 11–20; sequence DDGSGWTGSE. Positions 25 to 40 are enriched in gly residues; that stretch reads EGTGGSEGAGGDGGPD. A DNA-binding region (TEA) is located at residues 38 to 114; that stretch reads GPDAEGVWSP…QVLARRKSRE (77 aa). A transcriptional activation region spans residues 172–447; it reads WNVPDVKPFS…QHHIYRLVRD (276 aa). The segment covering 183–206 has biased composition (low complexity); the sequence is TPFTLSLTPPSTDLPGYEPPQALS. A compositionally biased stretch (pro residues) spans 207–216; sequence PLPPPTPSPP.

Interacts with YAP1 and WWTR1/TAZ.

It localises to the nucleus. Its function is as follows. Transcription factor which plays a key role in the Hippo signaling pathway, a pathway involved in organ size control and tumor suppression by restricting proliferation and promoting apoptosis. The core of this pathway is composed of a kinase cascade wherein MST1/MST2, in complex with its regulatory protein SAV1, phosphorylates and activates LATS1/2 in complex with its regulatory protein MOB1, which in turn phosphorylates and inactivates YAP1 oncoprotein and WWTR1/TAZ. Acts by mediating gene expression of YAP1 and WWTR1/TAZ, thereby regulating cell proliferation, migration and epithelial mesenchymal transition (EMT) induction. Binds to the SPH and GT-IIC 'enhansons' (5'-GTGGAATGT-3'). May be involved in the gene regulation of neural development. Binds to the M-CAT motif. This chain is Transcriptional enhancer factor TEF-4 (TEAD2), found in Homo sapiens (Human).